The following is a 440-amino-acid chain: Chromosome partition protein MukF (440 aa).

The segment at 208–236 is leucine-zipper; it reads LSETSGTLRELQDTLEAAGDKLQANLLRI.

This sequence belongs to the MukF family. In terms of assembly, interacts, and probably forms a ternary complex, with MukE and MukB via its C-terminal region. The complex formation is stimulated by calcium or magnesium. It is required for an interaction between MukE and MukB.

It localises to the cytoplasm. Its subcellular location is the nucleoid. In terms of biological role, involved in chromosome condensation, segregation and cell cycle progression. May participate in facilitating chromosome segregation by condensation DNA from both sides of a centrally located replisome during cell division. Not required for mini-F plasmid partitioning. Probably acts via its interaction with MukB and MukE. Overexpression results in anucleate cells. It has a calcium binding activity. This is Chromosome partition protein MukF from Serratia proteamaculans (strain 568).